Here is a 271-residue protein sequence, read N- to C-terminus: 4-hydroxy-tetrahydrodipicolinate reductase (271 aa).

Residues 12 to 17 (GGSGRM) and E38 contribute to the NAD(+) site. R39 is an NADP(+) binding site. NAD(+) is bound by residues 102–104 (GTT) and 126–129 (APNM). The Proton donor/acceptor role is filled by H159. Residue H160 participates in (S)-2,3,4,5-tetrahydrodipicolinate binding. K163 acts as the Proton donor in catalysis. 169-170 (GT) contributes to the (S)-2,3,4,5-tetrahydrodipicolinate binding site.

This sequence belongs to the DapB family.

It is found in the cytoplasm. The catalysed reaction is (S)-2,3,4,5-tetrahydrodipicolinate + NAD(+) + H2O = (2S,4S)-4-hydroxy-2,3,4,5-tetrahydrodipicolinate + NADH + H(+). The enzyme catalyses (S)-2,3,4,5-tetrahydrodipicolinate + NADP(+) + H2O = (2S,4S)-4-hydroxy-2,3,4,5-tetrahydrodipicolinate + NADPH + H(+). It functions in the pathway amino-acid biosynthesis; L-lysine biosynthesis via DAP pathway; (S)-tetrahydrodipicolinate from L-aspartate: step 4/4. Functionally, catalyzes the conversion of 4-hydroxy-tetrahydrodipicolinate (HTPA) to tetrahydrodipicolinate. This chain is 4-hydroxy-tetrahydrodipicolinate reductase, found in Shewanella sediminis (strain HAW-EB3).